The chain runs to 505 residues: tRNA-2-methylthio-N(6)-dimethylallyladenosine synthase (505 aa).

An MTTase N-terminal domain is found at 14–132 (RTYEVRTYGC…LPVLLERARV (119 aa)). Residues Cys-23, Cys-61, Cys-95, Cys-169, Cys-173, and Cys-176 each coordinate [4Fe-4S] cluster. Positions 155–386 (RESAYAAWVS…ALQEEISWDE (232 aa)) constitute a Radical SAM core domain. The 69-residue stretch at 388-456 (KKQVGRTLEL…PHHLLAEGAV (69 aa)) folds into the TRAM domain.

This sequence belongs to the methylthiotransferase family. MiaB subfamily. Monomer. [4Fe-4S] cluster is required as a cofactor.

It localises to the cytoplasm. The catalysed reaction is N(6)-dimethylallyladenosine(37) in tRNA + (sulfur carrier)-SH + AH2 + 2 S-adenosyl-L-methionine = 2-methylsulfanyl-N(6)-dimethylallyladenosine(37) in tRNA + (sulfur carrier)-H + 5'-deoxyadenosine + L-methionine + A + S-adenosyl-L-homocysteine + 2 H(+). Its function is as follows. Catalyzes the methylthiolation of N6-(dimethylallyl)adenosine (i(6)A), leading to the formation of 2-methylthio-N6-(dimethylallyl)adenosine (ms(2)i(6)A) at position 37 in tRNAs that read codons beginning with uridine. The protein is tRNA-2-methylthio-N(6)-dimethylallyladenosine synthase of Streptomyces coelicolor (strain ATCC BAA-471 / A3(2) / M145).